The sequence spans 337 residues: MTDHALLLVNLGSPASTSVADVRRYLNQFLMDPYVVDLPWPVRRLLVSLILIKRPEQSAHAYASIWWDEGSPLVVLTRRLQAAMVEHWPHGPVEIAMRYGEPALPQVLERLAAQGVRKVTLAPLYPQFADSTVTTVVALANQTVAERALPLQLRVLQPFYDHPEYIDALVASARPYLEQDYDHLLLSFHGLPERHLKKLMPGSKHDLRAADCCKDASAEVRAVCYRGQCLASAKAFATRMGIPDGKWSVSFQSRLGRDKWIEPYTETRLDELAKAGAKKLLVMCPAFVADCIETLEEIGDRGKEQFIEAGGEELVLVPCLNDHPEWVRVLARMCEKA.

2 residues coordinate Fe cation: H189 and E293.

This sequence belongs to the ferrochelatase family.

It localises to the cytoplasm. The catalysed reaction is heme b + 2 H(+) = protoporphyrin IX + Fe(2+). It functions in the pathway porphyrin-containing compound metabolism; protoheme biosynthesis; protoheme from protoporphyrin-IX: step 1/1. Functionally, catalyzes the ferrous insertion into protoporphyrin IX. The sequence is that of Ferrochelatase from Pseudomonas putida (strain W619).